Consider the following 616-residue polypeptide: Dihydroxy-acid dehydratase (616 aa).

D81 is a Mg(2+) binding site. C122 serves as a coordination point for [2Fe-2S] cluster. Mg(2+) is bound by residues D123 and K124. The residue at position 124 (K124) is an N6-carboxylysine. C195 lines the [2Fe-2S] cluster pocket. Residue E491 participates in Mg(2+) binding. The active-site Proton acceptor is the S517.

Belongs to the IlvD/Edd family. As to quaternary structure, homodimer. The cofactor is [2Fe-2S] cluster. It depends on Mg(2+) as a cofactor.

It carries out the reaction (2R)-2,3-dihydroxy-3-methylbutanoate = 3-methyl-2-oxobutanoate + H2O. The enzyme catalyses (2R,3R)-2,3-dihydroxy-3-methylpentanoate = (S)-3-methyl-2-oxopentanoate + H2O. The protein operates within amino-acid biosynthesis; L-isoleucine biosynthesis; L-isoleucine from 2-oxobutanoate: step 3/4. It functions in the pathway amino-acid biosynthesis; L-valine biosynthesis; L-valine from pyruvate: step 3/4. In terms of biological role, functions in the biosynthesis of branched-chain amino acids. Catalyzes the dehydration of (2R,3R)-2,3-dihydroxy-3-methylpentanoate (2,3-dihydroxy-3-methylvalerate) into 2-oxo-3-methylpentanoate (2-oxo-3-methylvalerate) and of (2R)-2,3-dihydroxy-3-methylbutanoate (2,3-dihydroxyisovalerate) into 2-oxo-3-methylbutanoate (2-oxoisovalerate), the penultimate precursor to L-isoleucine and L-valine, respectively. The polypeptide is Dihydroxy-acid dehydratase (Edwardsiella ictaluri (strain 93-146)).